A 338-amino-acid chain; its full sequence is MKTDDFDYKLPEELIASYPLENRDASRLLKLNKQTGEIADYKFTDFIDFINPGDLLVFNNSKVMLARLYGSKTTGAKLEYLIERIKNPKLFETHIKANRSPAIGSEIYVEDTLAKVLDKDGGMYLLEIQGDKDIYQLMEEFGHIPLPPYMKRDDEEFDAERYQTVYAQDLGSVAALTAGLHFSKELMQQIKDKGVDIAYITLHVGSGTFKPVQVDDVESHKMHAEVISVPVEVCQKIRQTKENGGRVITIGTTSVRSLETAGQNGQIEPYQGETDIFLYPGKKFNVVDAMITNFHLPKSTLIMLVSAFADKEKIIKAYEHAIAERYRFFSYGDAMFIF.

This sequence belongs to the QueA family. As to quaternary structure, monomer.

It localises to the cytoplasm. It catalyses the reaction 7-aminomethyl-7-carbaguanosine(34) in tRNA + S-adenosyl-L-methionine = epoxyqueuosine(34) in tRNA + adenine + L-methionine + 2 H(+). Its pathway is tRNA modification; tRNA-queuosine biosynthesis. Functionally, transfers and isomerizes the ribose moiety from AdoMet to the 7-aminomethyl group of 7-deazaguanine (preQ1-tRNA) to give epoxyqueuosine (oQ-tRNA). This is S-adenosylmethionine:tRNA ribosyltransferase-isomerase from Francisella tularensis subsp. holarctica (strain FTNF002-00 / FTA).